Reading from the N-terminus, the 195-residue chain is Imidazoleglycerol-phosphate dehydratase (195 aa).

This sequence belongs to the imidazoleglycerol-phosphate dehydratase family.

Its subcellular location is the cytoplasm. The enzyme catalyses D-erythro-1-(imidazol-4-yl)glycerol 3-phosphate = 3-(imidazol-4-yl)-2-oxopropyl phosphate + H2O. The protein operates within amino-acid biosynthesis; L-histidine biosynthesis; L-histidine from 5-phospho-alpha-D-ribose 1-diphosphate: step 6/9. In Bordetella petrii (strain ATCC BAA-461 / DSM 12804 / CCUG 43448), this protein is Imidazoleglycerol-phosphate dehydratase.